The sequence spans 340 residues: Dihydroorotate dehydrogenase (quinone) (340 aa).

Residues 67–71 and threonine 91 contribute to the FMN site; that span reads AGFDK. Residue lysine 71 participates in substrate binding. 116-120 contacts substrate; it reads NRMGF. The FMN site is built by asparagine 143 and asparagine 176. Asparagine 176 lines the substrate pocket. Catalysis depends on serine 179, which acts as the Nucleophile. Asparagine 181 is a binding site for substrate. The FMN site is built by lysine 217 and threonine 245. Substrate is bound at residue 246 to 247; it reads NT. FMN-binding positions include glycine 267, glycine 296, and 317–318; that span reads YT.

It belongs to the dihydroorotate dehydrogenase family. Type 2 subfamily. In terms of assembly, monomer. FMN serves as cofactor.

It is found in the cell membrane. The enzyme catalyses (S)-dihydroorotate + a quinone = orotate + a quinol. The protein operates within pyrimidine metabolism; UMP biosynthesis via de novo pathway; orotate from (S)-dihydroorotate (quinone route): step 1/1. Catalyzes the conversion of dihydroorotate to orotate with quinone as electron acceptor. The chain is Dihydroorotate dehydrogenase (quinone) from Christiangramia forsetii (strain DSM 17595 / CGMCC 1.15422 / KT0803) (Gramella forsetii).